The sequence spans 290 residues: Ribosomal RNA small subunit methyltransferase A (290 aa).

The S-adenosyl-L-methionine site is built by Asn27, Leu29, Gly54, Glu75, Asp100, and Asn125.

Belongs to the class I-like SAM-binding methyltransferase superfamily. rRNA adenine N(6)-methyltransferase family. RsmA subfamily.

It is found in the cytoplasm. The enzyme catalyses adenosine(1518)/adenosine(1519) in 16S rRNA + 4 S-adenosyl-L-methionine = N(6)-dimethyladenosine(1518)/N(6)-dimethyladenosine(1519) in 16S rRNA + 4 S-adenosyl-L-homocysteine + 4 H(+). Its function is as follows. Specifically dimethylates two adjacent adenosines (A1518 and A1519) in the loop of a conserved hairpin near the 3'-end of 16S rRNA in the 30S particle. May play a critical role in biogenesis of 30S subunits. This chain is Ribosomal RNA small subunit methyltransferase A, found in Streptococcus thermophilus (strain ATCC BAA-250 / LMG 18311).